We begin with the raw amino-acid sequence, 106 residues long: MNKIRKGDDIIVLTGRDKGKRGKIALRKDDSYVLVEGINVVKKHTKPNPLKGTVGGIVEKSMPIHQSNVAIFNVATGKADRVGIKLAADGKRVRVYKSSGEEIKVA.

Belongs to the universal ribosomal protein uL24 family. In terms of assembly, part of the 50S ribosomal subunit.

Functionally, one of two assembly initiator proteins, it binds directly to the 5'-end of the 23S rRNA, where it nucleates assembly of the 50S subunit. Its function is as follows. One of the proteins that surrounds the polypeptide exit tunnel on the outside of the subunit. This chain is Large ribosomal subunit protein uL24, found in Albidiferax ferrireducens (strain ATCC BAA-621 / DSM 15236 / T118) (Rhodoferax ferrireducens).